Here is a 430-residue protein sequence, read N- to C-terminus: Protein translocase subunit SecY (430 aa).

Transmembrane regions (helical) follow at residues 18 to 38 (IFFTLAMLVIFKIGTYIPAPG), 68 to 88 (FSIFAMGIMPYITASIVMQLL), 117 to 137 (FAIILAFIQSIGMAFQFNNYL), 147 to 167 (VMSYLLIAVVLTAGTAFLIWL), 174 to 194 (FGVGNGISLIIFAGILSTLPS), 217 to 237 (ILGLIVALILLTVGAIFVLEA), 270 to 290 (VIPVIFAMAFFLLPRTLTLFF), 308 to 328 (NIGMIIYVVLIIAFAYFYAFV), 368 to 388 (FVGSIFLAAIAILPIIATKFM), and 389 to 409 (GLPQSIQIGGTSLLIVIGVAI).

Belongs to the SecY/SEC61-alpha family. Component of the Sec protein translocase complex. Heterotrimer consisting of SecY, SecE and SecG subunits. The heterotrimers can form oligomers, although 1 heterotrimer is thought to be able to translocate proteins. Interacts with the ribosome. Interacts with SecDF, and other proteins may be involved. Interacts with SecA.

Its subcellular location is the cell membrane. Functionally, the central subunit of the protein translocation channel SecYEG. Consists of two halves formed by TMs 1-5 and 6-10. These two domains form a lateral gate at the front which open onto the bilayer between TMs 2 and 7, and are clamped together by SecE at the back. The channel is closed by both a pore ring composed of hydrophobic SecY resides and a short helix (helix 2A) on the extracellular side of the membrane which forms a plug. The plug probably moves laterally to allow the channel to open. The ring and the pore may move independently. The sequence is that of Protein translocase subunit SecY from Staphylococcus epidermidis (strain ATCC 35984 / DSM 28319 / BCRC 17069 / CCUG 31568 / BM 3577 / RP62A).